Reading from the N-terminus, the 326-residue chain is Phospho-N-acetylmuramoyl-pentapeptide-transferase (326 aa).

The next 9 helical transmembrane spans lie at 3 to 23 (ISIS…PAFI), 51 to 71 (TMGG…FALF), 79 to 99 (VGMI…DDFL), 115 to 135 (LALQ…GGDI), 138 to 158 (VFGY…FWLV), 169 to 189 (GVDG…GVIA), 195 to 215 (MDIL…FIFN), 221 to 243 (VFMG…MALH), and 306 to 326 (FFFW…LYLM).

The protein belongs to the glycosyltransferase 4 family. MraY subfamily. Requires Mg(2+) as cofactor.

Its subcellular location is the cell membrane. The enzyme catalyses UDP-N-acetyl-alpha-D-muramoyl-L-alanyl-gamma-D-glutamyl-L-lysyl-D-alanyl-D-alanine + di-trans,octa-cis-undecaprenyl phosphate = Mur2Ac(oyl-L-Ala-gamma-D-Glu-L-Lys-D-Ala-D-Ala)-di-trans,octa-cis-undecaprenyl diphosphate + UMP. The protein operates within cell wall biogenesis; peptidoglycan biosynthesis. Functionally, catalyzes the initial step of the lipid cycle reactions in the biosynthesis of the cell wall peptidoglycan: transfers peptidoglycan precursor phospho-MurNAc-pentapeptide from UDP-MurNAc-pentapeptide onto the lipid carrier undecaprenyl phosphate, yielding undecaprenyl-pyrophosphoryl-MurNAc-pentapeptide, known as lipid I. This chain is Phospho-N-acetylmuramoyl-pentapeptide-transferase, found in Streptococcus pneumoniae (strain 70585).